The sequence spans 487 residues: Acetyl-coenzyme A carboxylase carboxyl transferase subunit beta, chloroplastic (487 aa).

The CoA carboxyltransferase N-terminal domain occupies 223–487; the sequence is LWVQCENCYG…LHAFFPLNQN (265 aa). Zn(2+) contacts are provided by Cys-227, Cys-230, Cys-246, and Cys-249. Residues 227–249 form a C4-type zinc finger; that stretch reads CENCYGLNYKKSFKSKMNLCEQC.

Belongs to the AccD/PCCB family. In terms of assembly, acetyl-CoA carboxylase is a heterohexamer composed of biotin carboxyl carrier protein, biotin carboxylase and 2 subunits each of ACCase subunit alpha and ACCase plastid-coded subunit beta (accD). Zn(2+) serves as cofactor.

The protein localises to the plastid. It is found in the chloroplast stroma. It carries out the reaction N(6)-carboxybiotinyl-L-lysyl-[protein] + acetyl-CoA = N(6)-biotinyl-L-lysyl-[protein] + malonyl-CoA. It participates in lipid metabolism; malonyl-CoA biosynthesis; malonyl-CoA from acetyl-CoA: step 1/1. Its function is as follows. Component of the acetyl coenzyme A carboxylase (ACC) complex. Biotin carboxylase (BC) catalyzes the carboxylation of biotin on its carrier protein (BCCP) and then the CO(2) group is transferred by the transcarboxylase to acetyl-CoA to form malonyl-CoA. In Panax ginseng (Korean ginseng), this protein is Acetyl-coenzyme A carboxylase carboxyl transferase subunit beta, chloroplastic.